The sequence spans 360 residues: UDP-N-acetylglucosamine--N-acetylmuramyl-(pentapeptide) pyrophosphoryl-undecaprenol N-acetylglucosamine transferase (360 aa).

2 residues coordinate UDP-N-acetyl-alpha-D-glucosamine: S198 and Q289.

It belongs to the glycosyltransferase 28 family. MurG subfamily.

It localises to the cell membrane. The catalysed reaction is Mur2Ac(oyl-L-Ala-gamma-D-Glu-L-Lys-D-Ala-D-Ala)-di-trans,octa-cis-undecaprenyl diphosphate + UDP-N-acetyl-alpha-D-glucosamine = beta-D-GlcNAc-(1-&gt;4)-Mur2Ac(oyl-L-Ala-gamma-D-Glu-L-Lys-D-Ala-D-Ala)-di-trans,octa-cis-undecaprenyl diphosphate + UDP + H(+). Its pathway is cell wall biogenesis; peptidoglycan biosynthesis. Its function is as follows. Cell wall formation. Catalyzes the transfer of a GlcNAc subunit on undecaprenyl-pyrophosphoryl-MurNAc-pentapeptide (lipid intermediate I) to form undecaprenyl-pyrophosphoryl-MurNAc-(pentapeptide)GlcNAc (lipid intermediate II). This chain is UDP-N-acetylglucosamine--N-acetylmuramyl-(pentapeptide) pyrophosphoryl-undecaprenol N-acetylglucosamine transferase, found in Streptococcus pyogenes serotype M6 (strain ATCC BAA-946 / MGAS10394).